We begin with the raw amino-acid sequence, 319 residues long: Coproporphyrin III ferrochelatase (319 aa).

Positions 193 and 274 each coordinate Fe(2+).

This sequence belongs to the ferrochelatase family.

It localises to the cytoplasm. It carries out the reaction Fe-coproporphyrin III + 2 H(+) = coproporphyrin III + Fe(2+). It functions in the pathway porphyrin-containing compound metabolism; protoheme biosynthesis. Its function is as follows. Involved in coproporphyrin-dependent heme b biosynthesis. Catalyzes the insertion of ferrous iron into coproporphyrin III to form Fe-coproporphyrin III. This Streptococcus mutans serotype c (strain ATCC 700610 / UA159) protein is Coproporphyrin III ferrochelatase.